A 185-amino-acid chain; its full sequence is Ribosome-recycling factor (185 aa).

The protein belongs to the RRF family.

The protein resides in the cytoplasm. In terms of biological role, responsible for the release of ribosomes from messenger RNA at the termination of protein biosynthesis. May increase the efficiency of translation by recycling ribosomes from one round of translation to another. In Listeria innocua serovar 6a (strain ATCC BAA-680 / CLIP 11262), this protein is Ribosome-recycling factor.